The chain runs to 262 residues: NAD-dependent glucose-6-phosphate dehydrogenase (262 aa).

Asn90, Ser115, Tyr152, and Lys156 together coordinate NAD(+). Tyr152 serves as the catalytic Proton acceptor.

It belongs to the NAD(P)-dependent epimerase/dehydratase family. Homodimer.

It catalyses the reaction D-glucose 6-phosphate + NAD(+) = 6-phospho-D-glucono-1,5-lactone + NADH + H(+). It functions in the pathway carbohydrate degradation; pentose phosphate pathway. Catalyzes the NAD-dependent oxidation of glucose 6-phosphate to 6-phosphogluconolactone. In Haloferax volcanii (strain ATCC 29605 / DSM 3757 / JCM 8879 / NBRC 14742 / NCIMB 2012 / VKM B-1768 / DS2) (Halobacterium volcanii), this protein is NAD-dependent glucose-6-phosphate dehydrogenase.